The sequence spans 340 residues: Serine/threonine-protein kinase PDIK1L (340 aa).

Residues 8–333 form the Protein kinase domain; sequence YDLIREVGRG…LELRLVQIAF (326 aa). ATP-binding positions include 14 to 22 and lysine 37; that span reads VGRGSYGVV. Aspartate 164 serves as the catalytic Proton acceptor.

It belongs to the protein kinase superfamily. Ser/Thr protein kinase family.

The protein resides in the nucleus. The enzyme catalyses L-seryl-[protein] + ATP = O-phospho-L-seryl-[protein] + ADP + H(+). The catalysed reaction is L-threonyl-[protein] + ATP = O-phospho-L-threonyl-[protein] + ADP + H(+). The polypeptide is Serine/threonine-protein kinase PDIK1L (PDIK1L) (Pongo abelii (Sumatran orangutan)).